The sequence spans 384 residues: Trophoblast glycoprotein-like (384 aa).

The first 30 residues, 1 to 30 (MAPRAGQRGLWSPLPGLLLLAAALSRPAAP), serve as a signal peptide directing secretion. 2 disulfide bridges follow: cysteine 31–cysteine 37 and cysteine 35–cysteine 47. Topologically, residues 31–309 (CPFQCYCFGS…DVAGPELEAS (279 aa)) are extracellular. LRR repeat units lie at residues 61-84 (PPDARNLTIVGANLTVLRAAAFAG), 95-118 (LPLLTALRLTHNNIEVVEDGAFDG), 119-142 (LPSLAALDLSHNPLRALGYRAFRG), 173-196 (LAELRLLGLVGNALSRLPLAALRL), and 198-219 (RLEQLDARVNALAGLGPDELSA). Residue asparagine 66 is glycosylated (N-linked (GlcNAc...) asparagine). 2 disulfides stabilise this stretch: cysteine 240-cysteine 266 and cysteine 242-cysteine 287. A helical transmembrane segment spans residues 310 to 330 (YVFFGLVLALIGLIFLMVLYL). The Cytoplasmic portion of the chain corresponds to 331 to 384 (NRRGIQRWMHNLREACRDQMEGYHYRYEQDADPRRAPAPAAPAGSRATSPGSGL). The interval 361–384 (ADPRRAPAPAAPAGSRATSPGSGL) is disordered. Over residues 367-384 (PAPAAPAGSRATSPGSGL) the composition is skewed to low complexity.

Its subcellular location is the membrane. The polypeptide is Trophoblast glycoprotein-like (Tpbgl) (Mus musculus (Mouse)).